The primary structure comprises 489 residues: UDP-N-acetylmuramoyl-L-alanyl-D-glutamate--2,6-diaminopimelate ligase (489 aa).

Residue S30 coordinates UDP-N-acetyl-alpha-D-muramoyl-L-alanyl-D-glutamate. Residue 113–119 (GTNGKTS) coordinates ATP. Residues 155-156 (TT), S182, Q188, and R190 each bind UDP-N-acetyl-alpha-D-muramoyl-L-alanyl-D-glutamate. Position 222 is an N6-carboxylysine (K222). Meso-2,6-diaminopimelate is bound by residues R388, 412 to 415 (DNPR), G463, and E467. The Meso-diaminopimelate recognition motif signature appears at 412–415 (DNPR).

Belongs to the MurCDEF family. MurE subfamily. Requires Mg(2+) as cofactor. Post-translationally, carboxylation is probably crucial for Mg(2+) binding and, consequently, for the gamma-phosphate positioning of ATP.

It localises to the cytoplasm. The enzyme catalyses UDP-N-acetyl-alpha-D-muramoyl-L-alanyl-D-glutamate + meso-2,6-diaminopimelate + ATP = UDP-N-acetyl-alpha-D-muramoyl-L-alanyl-gamma-D-glutamyl-meso-2,6-diaminopimelate + ADP + phosphate + H(+). It functions in the pathway cell wall biogenesis; peptidoglycan biosynthesis. Functionally, catalyzes the addition of meso-diaminopimelic acid to the nucleotide precursor UDP-N-acetylmuramoyl-L-alanyl-D-glutamate (UMAG) in the biosynthesis of bacterial cell-wall peptidoglycan. This Coxiella burnetii (strain RSA 493 / Nine Mile phase I) protein is UDP-N-acetylmuramoyl-L-alanyl-D-glutamate--2,6-diaminopimelate ligase.